Reading from the N-terminus, the 409-residue chain is 2-methylfumaryl-CoA isomerase (409 aa).

Catalysis depends on D165, which acts as the Nucleophile.

The protein belongs to the CoA-transferase III family. Mesaconyl-CoA isomerase subfamily. In terms of assembly, homodimer.

The enzyme catalyses 2-methylfumaryl-CoA = 3-methylfumaryl-CoA. With respect to regulation, partially inhibited by hydroxylamine. In terms of biological role, involved in the glyoxylate assimilation cycle used to regenerate acetyl-CoA and produce pyruvate as universal precursor for biosynthesis. This reaction involves an intramolecular CoA transferase that catalyzes the reversible transfer of the CoA moiety from the C1-carboxyl group of mesaconyl-CoA to the C4-carboxyl group. It does not require free mesaconate as CoA acceptor. This Chloroflexus aurantiacus (strain ATCC 29366 / DSM 635 / J-10-fl) protein is 2-methylfumaryl-CoA isomerase (mct).